We begin with the raw amino-acid sequence, 363 residues long: tRNA-specific 2-thiouridylase MnmA (363 aa).

Residues 8–15 (AMSGGVDS) and Leu-34 contribute to the ATP site. Cys-103 functions as the Nucleophile in the catalytic mechanism. Cys-103 and Cys-195 are joined by a disulfide. Gly-127 provides a ligand contact to ATP. The tract at residues 145-147 (KDQ) is interaction with tRNA. Residue Cys-195 is the Cysteine persulfide intermediate of the active site.

This sequence belongs to the MnmA/TRMU family.

It localises to the cytoplasm. The catalysed reaction is S-sulfanyl-L-cysteinyl-[protein] + uridine(34) in tRNA + AH2 + ATP = 2-thiouridine(34) in tRNA + L-cysteinyl-[protein] + A + AMP + diphosphate + H(+). In terms of biological role, catalyzes the 2-thiolation of uridine at the wobble position (U34) of tRNA, leading to the formation of s(2)U34. The sequence is that of tRNA-specific 2-thiouridylase MnmA from Thermobifida fusca (strain YX).